A 660-amino-acid polypeptide reads, in one-letter code: Neurexin-2-beta (660 aa).

Over residues 1 to 10 the composition is skewed to gly residues; sequence MPPGGSGQGG. The interval 1 to 27 is disordered; that stretch reads MPPGGSGQGGCPRRPPALAGPLPPPPP. The signal sequence occupies residues 1–46; it reads MPPGGSGQGGCPRRPPALAGPLPPPPPPPPLPLLLGLLLLLGAAEG. Topologically, residues 47-584 are extracellular; sequence ARVSSSLSTT…EVIRESSSTT (538 aa). Positions 87-295 constitute a Laminin G-like domain; sequence TTYIFGKGGA…HLRLVGEGPS (209 aa). Ca(2+) is bound by residues Asp139 and Val156. The N-linked (GlcNAc...) asparagine glycan is linked to Asn186. Residues Ile238 and Asn240 each contribute to the Ca(2+) site. Ser350 carries an O-linked (Xyl...) (heparan sulfate) serine glycan. Disordered regions lie at residues 408-458 and 537-571; these read ATQD…LPPT and EPRR…RGPP. Asn561 carries N-linked (GlcNAc...) asparagine glycosylation. The helical transmembrane segment at 585-605 threads the bilayer; sequence GMVVGIVAAAALCILILLYAM. Topologically, residues 606–660 are cytoplasmic; that stretch reads YKYRNRDEGSYQVDQSRNYISNSAQSNGAVVKEKAPAAPKTPSKAKKNKDKEYYV. The disordered stretch occupies residues 627–660; the sequence is NSAQSNGAVVKEKAPAAPKTPSKAKKNKDKEYYV.

Belongs to the neurexin family. Interacts (via cytoplasmic C-terminal region) with CASK. Specific isoforms bind alpha-dystroglycan and neuroligins NLGN1, NLGN2 and NLGN3. Interacts with CBLN1, CBLN2 and, less avidly, with CBLN4. Interacts with CLSTN3. Post-translationally, O-glycosylated; contains heparan sulfate. Heparan sulfate attachment is required for synapse development by mediating interactions with neuroligins.

The protein localises to the presynaptic cell membrane. Its function is as follows. Neuronal cell surface protein that may be involved in cell recognition and cell adhesion. This chain is Neurexin-2-beta, found in Mus musculus (Mouse).